We begin with the raw amino-acid sequence, 450 residues long: Molybdate-anion transporter (450 aa).

12 helical membrane-spanning segments follow: residues methionine 1–leucine 21, leucine 43–leucine 63, isoleucine 79–valine 99, phenylalanine 128–phenylalanine 148, phenylalanine 176–methionine 196, leucine 198–alanine 218, valine 249–leucine 269, glycine 278–leucine 298, proline 311–phenylalanine 331, phenylalanine 344–leucine 364, glycine 376–leucine 396, and phenylalanine 409–valine 429.

This sequence belongs to the major facilitator superfamily.

Its subcellular location is the cell membrane. Its function is as follows. Mediates high-affinity intracellular uptake of the rare oligo-element molybdenum. This is Molybdate-anion transporter (MFSD5) from Bos taurus (Bovine).